We begin with the raw amino-acid sequence, 296 residues long: Diaminopimelate epimerase (296 aa).

3 residues coordinate substrate: asparagine 17, glutamine 49, and asparagine 69. The active-site Proton donor is the cysteine 78. Substrate contacts are provided by residues 79-80, asparagine 171, asparagine 205, and 223-224; these read GN and ER. Cysteine 232 (proton acceptor) is an active-site residue. Position 233–234 (233–234) interacts with substrate; it reads GT.

This sequence belongs to the diaminopimelate epimerase family. As to quaternary structure, homodimer.

Its subcellular location is the cytoplasm. The enzyme catalyses (2S,6S)-2,6-diaminopimelate = meso-2,6-diaminopimelate. The protein operates within amino-acid biosynthesis; L-lysine biosynthesis via DAP pathway; DL-2,6-diaminopimelate from LL-2,6-diaminopimelate: step 1/1. Its function is as follows. Catalyzes the stereoinversion of LL-2,6-diaminopimelate (L,L-DAP) to meso-diaminopimelate (meso-DAP), a precursor of L-lysine and an essential component of the bacterial peptidoglycan. The sequence is that of Diaminopimelate epimerase from Methylorubrum populi (strain ATCC BAA-705 / NCIMB 13946 / BJ001) (Methylobacterium populi).